Here is an 872-residue protein sequence, read N- to C-terminus: Alanine--tRNA ligase (872 aa).

His-566, His-570, Cys-668, and His-672 together coordinate Zn(2+).

Belongs to the class-II aminoacyl-tRNA synthetase family. Zn(2+) serves as cofactor.

It localises to the cytoplasm. It catalyses the reaction tRNA(Ala) + L-alanine + ATP = L-alanyl-tRNA(Ala) + AMP + diphosphate. Functionally, catalyzes the attachment of alanine to tRNA(Ala) in a two-step reaction: alanine is first activated by ATP to form Ala-AMP and then transferred to the acceptor end of tRNA(Ala). Also edits incorrectly charged Ser-tRNA(Ala) and Gly-tRNA(Ala) via its editing domain. In Lactococcus lactis subsp. lactis (strain IL1403) (Streptococcus lactis), this protein is Alanine--tRNA ligase.